Reading from the N-terminus, the 95-residue chain is uncharacterized protein (95 aa).

A helical transmembrane segment spans residues 12–32 (LASLIVSMVVLVVGLALWFFV). The interval 66-87 (ANEPEKEAEPATAASEPKEDED) is disordered.

It localises to the cell membrane. This is an uncharacterized protein from Salmonella typhi.